The following is a 782-amino-acid chain: Pyridoxal-dependent decarboxylase domain-containing protein 1 (782 aa).

Residues 26 to 48 show a composition bias toward basic and acidic residues; the sequence is ILEDNQRPSEEEKDGKKYTRKDI. Disordered stretches follow at residues 26–56, 673–695, 702–721, and 726–782; these read ILED…QGSG, QTTG…AGQK, RNSD…EVES, and PMPE…DSLR. Composition is skewed to polar residues over residues 703–714 and 747–782; these read NSDAMSETSSIS and AEQS…DSLR.

Belongs to the group II decarboxylase family. It depends on pyridoxal 5'-phosphate as a cofactor.

The chain is Pyridoxal-dependent decarboxylase domain-containing protein 1 (pdxdc1) from Xenopus laevis (African clawed frog).